The following is a 420-amino-acid chain: Tyrosine--tRNA ligase (420 aa).

Residue Tyr38 coordinates L-tyrosine. Residues 43–52 (PTGDSLHIGH) carry the 'HIGH' region motif. L-tyrosine-binding residues include Tyr169 and Gln173. Positions 231–235 (KFGKS) match the 'KMSKS' region motif. ATP is bound at residue Lys234. Positions 353–419 (KNIVEFLVET…GKRKYTLVKI (67 aa)) constitute an S4 RNA-binding domain.

It belongs to the class-I aminoacyl-tRNA synthetase family. TyrS type 1 subfamily. As to quaternary structure, homodimer.

The protein localises to the cytoplasm. It carries out the reaction tRNA(Tyr) + L-tyrosine + ATP = L-tyrosyl-tRNA(Tyr) + AMP + diphosphate + H(+). Catalyzes the attachment of tyrosine to tRNA(Tyr) in a two-step reaction: tyrosine is first activated by ATP to form Tyr-AMP and then transferred to the acceptor end of tRNA(Tyr). This chain is Tyrosine--tRNA ligase, found in Lactobacillus johnsonii (strain CNCM I-12250 / La1 / NCC 533).